Reading from the N-terminus, the 372-residue chain is Chloromuconate cycloisomerase (372 aa).

The active-site Proton acceptor is lysine 158. Aspartate 187, glutamate 213, and aspartate 238 together coordinate Mn(2+). The active-site Proton donor is the glutamate 316.

The protein belongs to the mandelate racemase/muconate lactonizing enzyme family. The cofactor is Mn(2+).

It carries out the reaction 2-[(2R)-2-chloro-2,5-dihydro-5-oxofuryl]acetate = 3-chloro-cis,cis-muconate + H(+). It participates in aromatic compound metabolism; 3-chlorocatechol degradation. This Cupriavidus pinatubonensis (strain JMP 134 / LMG 1197) (Cupriavidus necator (strain JMP 134)) protein is Chloromuconate cycloisomerase (tfdDII).